A 1442-amino-acid polypeptide reads, in one-letter code: DNA polymerase III PolC-type (1442 aa).

The Exonuclease domain occupies 409–568 (YVIFDIETTG…YDAIVLADVF (160 aa)).

It belongs to the DNA polymerase type-C family. PolC subfamily.

The protein resides in the cytoplasm. It carries out the reaction DNA(n) + a 2'-deoxyribonucleoside 5'-triphosphate = DNA(n+1) + diphosphate. In terms of biological role, required for replicative DNA synthesis. This DNA polymerase also exhibits 3' to 5' exonuclease activity. The protein is DNA polymerase III PolC-type of Ureaplasma parvum serovar 3 (strain ATCC 700970).